The chain runs to 156 residues: MPRKGHISKRDVLPDPIYGSKTVTKLINNVMYDGKKGIAQQICYDAFDIIKEKTGRDPLEVFEEAMANIMPVLEVKARRVGGATYQVPMEVRPDRRQALGLRWLVDYSRKRGERTMRERLSGEILDAINNMGGAYKKKEDTHKMAEANRAFAHYRW.

It belongs to the universal ribosomal protein uS7 family. In terms of assembly, part of the 30S ribosomal subunit. Contacts proteins S9 and S11.

Its function is as follows. One of the primary rRNA binding proteins, it binds directly to 16S rRNA where it nucleates assembly of the head domain of the 30S subunit. Is located at the subunit interface close to the decoding center, probably blocks exit of the E-site tRNA. This is Small ribosomal subunit protein uS7 from Ruminiclostridium cellulolyticum (strain ATCC 35319 / DSM 5812 / JCM 6584 / H10) (Clostridium cellulolyticum).